The following is a 422-amino-acid chain: Interleukin-11 receptor subunit alpha (422 aa).

The N-terminal stretch at 1–22 is a signal peptide; that stretch reads MSSSCSGLSRVLVAVATALVSA. At 24-370 the chain is on the extracellular side; the sequence is SPCPQAWGPP…DSVEQVAVLA (347 aa). Positions 27 to 110 constitute an Ig-like C2-type domain; it reads PQAWGPPGVQ…LGGTVTLQLG (84 aa). Cystine bridges form between cysteine 48-cysteine 94, cysteine 120-cysteine 130, and cysteine 170-cysteine 180. 2 consecutive Fibronectin type-III domains span residues 112–219 and 220–317; these read PPAR…LRPD and PPQG…TPST. N-linked (GlcNAc...) asparagine glycosylation is present at asparagine 127. A glycan (N-linked (GlcNAc...) asparagine) is linked at asparagine 194. The WSXWS motif signature appears at 304–308; it reads WSTWS. The disordered stretch occupies residues 335-355; that stretch reads EVEPQVDSPAPPRPSLQPHPR. A helical transmembrane segment spans residues 371 to 391; sequence SLGILSFLGLVAGALALGLWL. At 392 to 422 the chain is on the cytoplasmic side; the sequence is RLRRGGKDGSPKPGFLASVIPVDRRPGAPNL. Positions 398-422 are disordered; that stretch reads KDGSPKPGFLASVIPVDRRPGAPNL. The span at 413–422 shows a compositional bias: basic and acidic residues; the sequence is VDRRPGAPNL.

Belongs to the type I cytokine receptor family. Type 3 subfamily. In terms of assembly, on IL11 binding, forms a multimer complex with IL6ST/gp130. In terms of processing, a short soluble form is also released from the membrane by proteolysis. The sIL11RA is formed either by limited proteolysis of membrane-bound receptors, a process referred to as ectodomain shedding, or directly secreted from the cells after alternative mRNA splicing. mIL11RA is cleaved by the proteases ADAM10, ELANE and PRTN3. As to expression, expressed in a number of cell lines, including the myelogenous leukemia cell line K-562, the megakaryocytic leukemia cell line M-07e, the erythroleukemia cell line TF-1, and the osteosarcoma cell lines, MG-63 and SaOS-2. Also expressed in normal and malignant prostate epithelial cell lines. Expression levels are increased in prostate carcinoma.

It localises to the membrane. The protein localises to the secreted. Functionally, receptor for interleukin-11 (IL11). The receptor systems for IL6, LIF, OSM, CNTF, IL11 and CT1 can utilize IL6ST for initiating signal transmission. The IL11/IL11RA/IL6ST complex may be involved in the control of proliferation and/or differentiation of skeletogenic progenitor or other mesenchymal cells. Essential for the normal development of craniofacial bones and teeth. Restricts suture fusion and tooth number. Soluble form of IL11 receptor (sIL11RA) that acts as an agonist of IL11 activity. The IL11:sIL11RA complex binds to IL6ST/gp130 on cell surfaces and induces signaling also on cells that do not express membrane-bound IL11RA in a process called IL11 trans-signaling. The sequence is that of Interleukin-11 receptor subunit alpha from Homo sapiens (Human).